Reading from the N-terminus, the 221-residue chain is Small ribosomal subunit protein uS5 (221 aa).

The region spanning 46–109 (LKDEVINIER…DNAKLNIIEI (64 aa)) is the S5 DRBM domain.

Belongs to the universal ribosomal protein uS5 family. Part of the 30S ribosomal subunit. Contacts protein S4.

In terms of biological role, with S4 and S12 plays an important role in translational accuracy. This chain is Small ribosomal subunit protein uS5, found in Picrophilus torridus (strain ATCC 700027 / DSM 9790 / JCM 10055 / NBRC 100828 / KAW 2/3).